An 861-amino-acid chain; its full sequence is DNA mismatch repair protein MutS (861 aa).

Residue 617–624 (GPNMGGKS) participates in ATP binding. The interval 799 to 822 (ETTSLPHEQPPAAKAKDAPQVPHQ) is disordered. The segment covering 808–820 (PPAAKAKDAPQVP) has biased composition (low complexity).

It belongs to the DNA mismatch repair MutS family.

In terms of biological role, this protein is involved in the repair of mismatches in DNA. It is possible that it carries out the mismatch recognition step. This protein has a weak ATPase activity. This is DNA mismatch repair protein MutS from Pseudomonas putida (strain GB-1).